The following is a 707-amino-acid chain: tRNA 5-methylaminomethyl-2-thiouridine biosynthesis bifunctional protein MnmC (707 aa).

The tRNA (mnm(5)s(2)U34)-methyltransferase stretch occupies residues 1 to 264; it reads MTKKLEHEYI…KREMLFGTFE (264 aa). Residues 312-707 are FAD-dependent cmnm(5)s(2)U34 oxidoreductase; that stretch reads IGGGLAGAHA…LFRDLTRNRI (396 aa).

This sequence in the N-terminal section; belongs to the methyltransferase superfamily. tRNA (mnm(5)s(2)U34)-methyltransferase family. The protein in the C-terminal section; belongs to the DAO family. The cofactor is FAD.

The protein localises to the cytoplasm. The catalysed reaction is 5-aminomethyl-2-thiouridine(34) in tRNA + S-adenosyl-L-methionine = 5-methylaminomethyl-2-thiouridine(34) in tRNA + S-adenosyl-L-homocysteine + H(+). Catalyzes the last two steps in the biosynthesis of 5-methylaminomethyl-2-thiouridine (mnm(5)s(2)U) at the wobble position (U34) in tRNA. Catalyzes the FAD-dependent demodification of cmnm(5)s(2)U34 to nm(5)s(2)U34, followed by the transfer of a methyl group from S-adenosyl-L-methionine to nm(5)s(2)U34, to form mnm(5)s(2)U34. This is tRNA 5-methylaminomethyl-2-thiouridine biosynthesis bifunctional protein MnmC from Saccharophagus degradans (strain 2-40 / ATCC 43961 / DSM 17024).